The primary structure comprises 250 residues: Ubiquinone/menaquinone biosynthesis C-methyltransferase UbiE (250 aa).

Residues Ser73, Asp94, and 122 to 123 (NA) each bind S-adenosyl-L-methionine.

The protein belongs to the class I-like SAM-binding methyltransferase superfamily. MenG/UbiE family.

It catalyses the reaction a 2-demethylmenaquinol + S-adenosyl-L-methionine = a menaquinol + S-adenosyl-L-homocysteine + H(+). The enzyme catalyses a 2-methoxy-6-(all-trans-polyprenyl)benzene-1,4-diol + S-adenosyl-L-methionine = a 5-methoxy-2-methyl-3-(all-trans-polyprenyl)benzene-1,4-diol + S-adenosyl-L-homocysteine + H(+). It participates in quinol/quinone metabolism; menaquinone biosynthesis; menaquinol from 1,4-dihydroxy-2-naphthoate: step 2/2. It functions in the pathway cofactor biosynthesis; ubiquinone biosynthesis. Its function is as follows. Methyltransferase required for the conversion of demethylmenaquinol (DMKH2) to menaquinol (MKH2) and the conversion of 2-polyprenyl-6-methoxy-1,4-benzoquinol (DDMQH2) to 2-polyprenyl-3-methyl-6-methoxy-1,4-benzoquinol (DMQH2). The polypeptide is Ubiquinone/menaquinone biosynthesis C-methyltransferase UbiE (Legionella pneumophila subsp. pneumophila (strain Philadelphia 1 / ATCC 33152 / DSM 7513)).